A 233-amino-acid chain; its full sequence is Demethylmenaquinone methyltransferase (233 aa).

S-adenosyl-L-methionine-binding positions include threonine 60, aspartate 81, and 106–107 (DA).

Belongs to the class I-like SAM-binding methyltransferase superfamily. MenG/UbiE family.

The catalysed reaction is a 2-demethylmenaquinol + S-adenosyl-L-methionine = a menaquinol + S-adenosyl-L-homocysteine + H(+). Its pathway is quinol/quinone metabolism; menaquinone biosynthesis; menaquinol from 1,4-dihydroxy-2-naphthoate: step 2/2. Methyltransferase required for the conversion of demethylmenaquinol (DMKH2) to menaquinol (MKH2). This is Demethylmenaquinone methyltransferase from Staphylococcus saprophyticus subsp. saprophyticus (strain ATCC 15305 / DSM 20229 / NCIMB 8711 / NCTC 7292 / S-41).